The sequence spans 533 residues: Retinoic acid receptor RXR-beta (533 aa).

Residues M1–G23 form a disordered region. The modulating stretch occupies residues M1–L204. R25 is modified (omega-N-methylarginine). The tract at residues W36–P181 is disordered. The segment covering A46–P61 has biased composition (low complexity). Residues E67–S82 show a composition bias toward basic and acidic residues. 2 stretches are compositionally biased toward pro residues: residues N89–T109 and A118–S131. Residues P132–P143 are compositionally biased toward low complexity. Residues G144 to F153 show a composition bias toward pro residues. 2 NR C4-type zinc fingers span residues C205–C225 and C241–C265. Positions C205–M270 form a DNA-binding region, nuclear receptor. Residues K271–A295 are hinge. A compositionally biased stretch (basic and acidic residues) spans Q276–D288. Disordered regions lie at residues Q276–M299 and Q313–V336. Residues P296 to P529 form the NR LBD domain. A compositionally biased stretch (gly residues) spans E320 to G329.

This sequence belongs to the nuclear hormone receptor family. NR2 subfamily. In terms of assembly, homodimer (in vitro). Heterodimer with other retinoic acid receptor family members. Binds DNA preferentially as a RAR/RXR heterodimer. Interacts with NR1H3. Interacts with AKAP13. In terms of tissue distribution, expressed in aortic endothelial cells (at protein level). Expressed in monocytes. Expressed in a variety of tumor cell lines.

It is found in the nucleus. It localises to the cytoplasm. Receptor for retinoic acid. Retinoic acid receptors bind as heterodimers to their target response elements in response to their ligands, all-trans or 9-cis retinoic acid, and regulate gene expression in various biological processes. The RAR/RXR heterodimers bind to the retinoic acid response elements (RARE). The polypeptide is Retinoic acid receptor RXR-beta (RXRB) (Homo sapiens (Human)).